A 152-amino-acid polypeptide reads, in one-letter code: Erythema protein SVEP (152 aa).

The first 18 residues, 1-18 (MSITQSFFVLTLAIFGAA), serve as a signal peptide directing secretion.

As to expression, salivary gland (at protein level).

The protein resides in the secreted. Functionally, salivary vasoactive peptide; induces vasodilatation in bioassay with rabbit aortic rings. This chain is Erythema protein SVEP, found in Simulium vittatum (Striped black fly).